The sequence spans 175 residues: Pathogenesis-related protein 1A1 (175 aa).

Positions 1-21 are cleaved as a signal peptide; the sequence is MKSSIFVACFITFIIFHSSQA. Residues 29–146 enclose the SCP domain; it reads LNAHNAARRR…SGWVFITCNY (118 aa). 3 cysteine pairs are disulfide-bonded: Cys65/Cys135, Cys108/Cys114, and Cys130/Cys144.

The protein belongs to the CRISP family.

Functionally, probably involved in the defense reaction of plants against pathogens. The polypeptide is Pathogenesis-related protein 1A1 (Solanum lycopersicum (Tomato)).